We begin with the raw amino-acid sequence, 194 residues long: Small ribosomal subunit protein uS4c (194 aa).

A disordered region spans residues 1–29; sequence RFKKIRRLGTLPGLTSKRPRSGSDLKNPL. In terms of domain architecture, S4 RNA-binding spans 82-143; the sequence is MRLDNILFRL…KQRSKALIQN (62 aa).

This sequence belongs to the universal ribosomal protein uS4 family. As to quaternary structure, part of the 30S ribosomal subunit. Contacts protein S5. The interaction surface between S4 and S5 is involved in control of translational fidelity.

The protein localises to the plastid. Its subcellular location is the chloroplast. Its function is as follows. One of the primary rRNA binding proteins, it binds directly to 16S rRNA where it nucleates assembly of the body of the 30S subunit. With S5 and S12 plays an important role in translational accuracy. The chain is Small ribosomal subunit protein uS4c (rps4) from Furcraea foetida (Mauritius hemp).